The following is a 172-amino-acid chain: 3-hydroxydecanoyl-[acyl-carrier-protein] dehydratase (172 aa).

Residue histidine 71 is part of the active site.

It belongs to the thioester dehydratase family. FabA subfamily. As to quaternary structure, homodimer.

It localises to the cytoplasm. It carries out the reaction a (3R)-hydroxyacyl-[ACP] = a (2E)-enoyl-[ACP] + H2O. The catalysed reaction is (3R)-hydroxydecanoyl-[ACP] = (2E)-decenoyl-[ACP] + H2O. It catalyses the reaction (2E)-decenoyl-[ACP] = (3Z)-decenoyl-[ACP]. Its pathway is lipid metabolism; fatty acid biosynthesis. In terms of biological role, necessary for the introduction of cis unsaturation into fatty acids. Catalyzes the dehydration of (3R)-3-hydroxydecanoyl-ACP to E-(2)-decenoyl-ACP and then its isomerization to Z-(3)-decenoyl-ACP. Can catalyze the dehydratase reaction for beta-hydroxyacyl-ACPs with saturated chain lengths up to 16:0, being most active on intermediate chain length. The sequence is that of 3-hydroxydecanoyl-[acyl-carrier-protein] dehydratase from Escherichia coli (strain 55989 / EAEC).